A 512-amino-acid chain; its full sequence is Mucin-13 (512 aa).

The signal sequence occupies residues 1-18 (MKAIIHLTLLALLSVNTA). The Extracellular segment spans residues 19 to 421 (TNQGNSADAV…GLDCKDKFQL (403 aa)). Over residues 22–38 (GNSADAVTTTETATSGP) the composition is skewed to polar residues. Disordered stretches follow at residues 22–67 (GNSA…PTAT) and 133–176 (MVPS…PSNP). Low complexity predominate over residues 53-67 (TASTTANTPSFPTAT). A compositionally biased stretch (polar residues) spans 135-176 (PSETQSNNEMSPTTEDNQSSGPPTGTALLETSTLNSTGPSNP). 2 N-linked (GlcNAc...) asparagine glycosylation sites follow: Asn-151 and Asn-169. The region spanning 173–211 (PSNPCQDDPCADNSLCVKLHNTSFCLCLEGYYYNSSTCK) is the EGF-like 1 domain. 3 disulfides stabilise this stretch: Cys-177–Cys-188, Cys-182–Cys-197, and Cys-199–Cys-210. Asn-193, Asn-206, Asn-284, and Asn-332 each carry an N-linked (GlcNAc...) asparagine glycan. Residues 212 to 336 (KGKVFPGKIS…DYYGCNQTAD (125 aa)) form the SEA domain. 2 EGF-like domains span residues 322–361 (LTLR…PFCV) and 363–404 (SSLK…GNCQ). Disulfide bonds link Cys-326-Cys-338, Cys-331-Cys-344, Cys-346-Cys-360, Cys-367-Cys-378, Cys-371-Cys-389, and Cys-391-Cys-403. The chain crosses the membrane as a helical span at residues 422 to 442 (ILTIVGTIAGIVILSMIIALI). Topologically, residues 443 to 512 (VTARSNNKTK…RHSSMPRPDY (70 aa)) are cytoplasmic. The segment covering 493–505 (RDSQMQNPYSRHS) has biased composition (polar residues). The disordered stretch occupies residues 493–512 (RDSQMQNPYSRHSSMPRPDY).

As to quaternary structure, homodimer of beta subunits. Post-translationally, cleaved into two subunits, alpha and beta, probably between the first EGF domain and the SEA domain. Beta subunit contains the cytoplasmic tail and alpha subunit the extracellular tail. The homooligomerization into dimers is dependent on intrachain disulfide bonds. Highly N-glycosylated. In terms of tissue distribution, highly expressed in epithelial tissues, particularly those of the gastrointestinal and respiratory tracts, such as large intestine and trachea, followed by kidney, small intestine, appendix and stomach.

The protein resides in the cell membrane. It is found in the apical cell membrane. Its subcellular location is the secreted. In terms of biological role, epithelial and hemopoietic transmembrane mucin that may play a role in cell signaling. This is Mucin-13 (MUC13) from Homo sapiens (Human).